The chain runs to 558 residues: Putative ABC transporter ATP-binding protein SAG1633 (558 aa).

2 consecutive ABC transporter domains span residues 5–246 and 295–527; these read IEWK…GIRE and LSVQ…THLK. ATP-binding positions include 39–46 and 328–335; these read GPSGSGKS and GKNGAGKS.

The protein belongs to the ABC transporter superfamily.

The protein resides in the cell membrane. Probably part of an ABC transporter complex. Responsible for energy coupling to the transport system. The polypeptide is Putative ABC transporter ATP-binding protein SAG1633 (Streptococcus agalactiae serotype V (strain ATCC BAA-611 / 2603 V/R)).